Here is a 116-residue protein sequence, read N- to C-terminus: Large ribosomal subunit protein bL21c (116 aa).

It belongs to the bacterial ribosomal protein bL21 family. Part of the 50S ribosomal subunit.

The protein resides in the plastid. The protein localises to the chloroplast. In terms of biological role, this protein binds to 23S rRNA. The protein is Large ribosomal subunit protein bL21c of Marchantia polymorpha (Common liverwort).